The chain runs to 446 residues: Chromosomal replication initiator protein DnaA (446 aa).

Positions 1-81 (MENIADLWNS…AKLNIRFIIP (81 aa)) are domain I, interacts with DnaA modulators. Residues 81 to 109 (PQSQTEEEVDYPPAKAKKMNDESNHLPQS) are domain II. A domain III, AAA+ region region spans residues 110-326 (MLNPKYTFDT…GALIRVVAYS (217 aa)). ATP-binding residues include G154, G156, K157, and T158. Residues 327–446 (SLINKDINAD…QIEEINDILK (120 aa)) are domain IV, binds dsDNA.

It belongs to the DnaA family. In terms of assembly, oligomerizes as a right-handed, spiral filament on DNA at oriC.

The protein localises to the cytoplasm. In terms of biological role, plays an essential role in the initiation and regulation of chromosomal replication. ATP-DnaA binds to the origin of replication (oriC) to initiate formation of the DNA replication initiation complex once per cell cycle. Binds the DnaA box (a 9 base pair repeat at the origin) and separates the double-stranded (ds)DNA. Forms a right-handed helical filament on oriC DNA; dsDNA binds to the exterior of the filament while single-stranded (ss)DNA is stabiized in the filament's interior. The ATP-DnaA-oriC complex binds and stabilizes one strand of the AT-rich DNA unwinding element (DUE), permitting loading of DNA polymerase. After initiation quickly degrades to an ADP-DnaA complex that is not apt for DNA replication. Binds acidic phospholipids. This Bacillus cytotoxicus (strain DSM 22905 / CIP 110041 / 391-98 / NVH 391-98) protein is Chromosomal replication initiator protein DnaA.